A 1286-amino-acid polypeptide reads, in one-letter code: DNA-directed RNA polymerase 147 kDa polypeptide (1286 aa).

It belongs to the poxviridae DNA-directed RNA polymerase 147 kDa subunit family. As to quaternary structure, the DNA-dependent RNA polymerase used for intermediate and late genes expression consists of eight subunits Rpo30/OPG66, Rpo7/OPG90, Rpo22/OPG103, Rpo147/OPG105, Rpo18/OPG119, Rpo19/OPG131, Rpo132/OPG151 and Rpo35/OPG156. The same holoenzyme, with the addition of the transcription-specificity factor OPG109, is used for early gene expression.

It localises to the virion. The catalysed reaction is RNA(n) + a ribonucleoside 5'-triphosphate = RNA(n+1) + diphosphate. In terms of biological role, part of the DNA-dependent RNA polymerase which catalyzes the transcription of viral DNA into RNA using the four ribonucleoside triphosphates as substrates. Responsible for the transcription of early, intermediate and late genes. DNA-dependent RNA polymerase associates with the early transcription factor (ETF), itself composed of OPG118 and OPG133, thereby allowing the early genes transcription. Late transcription, and probably also intermediate transcription, require newly synthesized RNA polymerase. The sequence is that of DNA-directed RNA polymerase 147 kDa polypeptide (OPG105) from Monkeypox virus.